The primary structure comprises 144 residues: Mediator of RNA polymerase II transcription subunit 9 (144 aa).

The stretch at 85–143 (QDCNHKIFELQKRFESAREQIRQLPGIDFNKEEQQQRLELLRNQLKLKQQLIRKYKDTE) forms a coiled coil.

This sequence belongs to the Mediator complex subunit 9 family. As to quaternary structure, component of the Mediator complex.

Its subcellular location is the nucleus. Functionally, component of the Mediator complex, a coactivator involved in the regulated transcription of nearly all RNA polymerase II-dependent genes. Mediator functions as a bridge to convey information from gene-specific regulatory proteins to the basal RNA polymerase II transcription machinery. Mediator is recruited to promoters by direct interactions with regulatory proteins and serves as a scaffold for the assembly of a functional preinitiation complex with RNA polymerase II and the general transcription factors. The chain is Mediator of RNA polymerase II transcription subunit 9 (MED9) from Drosophila melanogaster (Fruit fly).